A 293-amino-acid polypeptide reads, in one-letter code: HTH-type transcriptional regulator ArgP (293 aa).

In terms of domain architecture, HTH lysR-type spans 4–60 (PDYRTLQALDAVIRERGFERAAQKLCITQSAVSQRIKQLENLFGQPLLVRTIPPHPT). The H-T-H motif DNA-binding region spans 21–40 (FERAAQKLCITQSAVSQRIK).

This sequence belongs to the LysR transcriptional regulatory family. In terms of assembly, homodimer.

Its function is as follows. Controls the transcription of genes involved in arginine and lysine metabolism. The protein is HTH-type transcriptional regulator ArgP of Sodalis glossinidius (strain morsitans).